Here is a 173-residue protein sequence, read N- to C-terminus: Large ribosomal subunit protein bL9 (173 aa).

The disordered stretch occupies residues 150 to 173; that stretch reads KQEDKKSLSKKLNKADEQGERAEV.

This sequence belongs to the bacterial ribosomal protein bL9 family.

Binds to the 23S rRNA. The sequence is that of Large ribosomal subunit protein bL9 from Borreliella burgdorferi (strain ZS7) (Borrelia burgdorferi).